A 220-amino-acid chain; its full sequence is Ribonuclease HII (220 aa).

Residues 32–220 form the RNase H type-2 domain; that stretch reads KHIVGIDEAG…FAPIKGRYSV (189 aa). 3 residues coordinate a divalent metal cation: aspartate 38, glutamate 39, and aspartate 130.

It belongs to the RNase HII family. Requires Mn(2+) as cofactor. The cofactor is Mg(2+).

Its subcellular location is the cytoplasm. The enzyme catalyses Endonucleolytic cleavage to 5'-phosphomonoester.. Functionally, endonuclease that specifically degrades the RNA of RNA-DNA hybrids. The polypeptide is Ribonuclease HII (Brucella anthropi (strain ATCC 49188 / DSM 6882 / CCUG 24695 / JCM 21032 / LMG 3331 / NBRC 15819 / NCTC 12168 / Alc 37) (Ochrobactrum anthropi)).